The sequence spans 84 residues: Protein Tlp homolog (84 aa).

Residues 1-20 are disordered; it reads MGKEERYTKKPKPDDRSDNV.

It belongs to the Tlp family.

The sequence is that of Protein Tlp homolog from Caldanaerobacter subterraneus subsp. tengcongensis (strain DSM 15242 / JCM 11007 / NBRC 100824 / MB4) (Thermoanaerobacter tengcongensis).